A 205-amino-acid polypeptide reads, in one-letter code: CD83 antigen (205 aa).

Residues 1–19 (MSRGLQLLLLSCAYSLAPA) form the signal peptide. Residues 20-114 (TPEVKVACSE…YRCTLQDPDG (95 aa)) form the Ig-like V-type domain. Residues 20–144 (TPEVKVACSE…EETFKKYRAE (125 aa)) lie on the Extracellular side of the membrane. A disulfide bridge connects residues Cys-35 and Cys-107. Basic and acidic residues predominate over residues 60 to 69 (METPQEDHLR). The tract at residues 60–81 (METPQEDHLRGQHYHQKGQNGS) is disordered. 3 N-linked (GlcNAc...) asparagine glycosylation sites follow: Asn-79, Asn-96, and Asn-117. The chain crosses the membrane as a helical span at residues 145-166 (IVLLLALVIFYLTLIIFTCKFA). The Cytoplasmic portion of the chain corresponds to 167–205 (RLQSIFPDFSKAGMERAFLPVTSPNKHLGLVTPHKTELV).

Monomer. Homodimer. Homotrimer. Interacts with MARCHF1; this interaction antagonizes MARCHF1-mediated MHC II and CD86 down-regulation. Glycosylated when expressed on activated dendritic cells. In terms of tissue distribution, expressed by activated lymphocytes, Langerhans cells and activatd dendritic cells.

It is found in the membrane. In terms of biological role, transmembrane glycoprotein predominantly found on the surface of many immune cells including dendritic cells or lymphocytes that plays various roles in immune response regulation. Plays an essential role in CD4(+) T-selection, differentiation and stability by regulating the activity of the major E3 ubiquitin ligase responsible for controlling MHCII trafficking MARCHF8. Also inhibits MARCHF1 association with MHCII or CD86 to prevent their ubiquitination and subsequent degradation. In addition, acts as an important modulator of protective responses against acute infections. This is CD83 antigen (CD83) from Homo sapiens (Human).